The following is a 345-amino-acid chain: Transcription factor 19 (345 aa).

Residues 31 to 88 (YRLGHRADLCDVALRPQQEPGLISGIHAELHAEPRGDDWRVSLEDHSLQGTLVNNVRL) enclose the FHA domain. Disordered stretches follow at residues 138-167 (RSRGETRAGAGFRPMLPSQGAPQRPLSTLS) and 190-277 (LTFS…KYPV). The PHD-type zinc-finger motif lies at 293–342 (AAPCCCLPQEETVAWVQCDGCDVWFHVACVGCSIQAAREADFRCPGCRAG). 8 residues coordinate Zn(2+): Cys296, Cys298, Cys310, Cys313, His318, Cys321, Cys336, and Cys339.

The protein localises to the nucleus. Potential transcription factor that may play a role in the regulation of genes involved in cell cycle G1/S transition. May bind to regulatory elements of genes, including the promoter of the transcription factor FOXO1. This Macaca mulatta (Rhesus macaque) protein is Transcription factor 19 (TCF19).